We begin with the raw amino-acid sequence, 426 residues long: Tol-Pal system protein TolB (426 aa).

A signal peptide spans M1–A24.

Belongs to the TolB family. In terms of assembly, the Tol-Pal system is composed of five core proteins: the inner membrane proteins TolA, TolQ and TolR, the periplasmic protein TolB and the outer membrane protein Pal. They form a network linking the inner and outer membranes and the peptidoglycan layer.

It localises to the periplasm. In terms of biological role, part of the Tol-Pal system, which plays a role in outer membrane invagination during cell division and is important for maintaining outer membrane integrity. The chain is Tol-Pal system protein TolB from Haemophilus ducreyi (strain 35000HP / ATCC 700724).